Reading from the N-terminus, the 1242-residue chain is DNA polymerase catalytic subunit (1242 aa).

Disordered stretches follow at residues 14–38, 644–665, 877–898, and 1108–1163; these read GAVA…RPPQ, LQSA…SSSS, EGDS…GGSN, and TAPQ…KPPS. Residues 653-665 are compositionally biased toward low complexity; it reads GVSPGSGSNSSSS. The segment covering 1110–1119 has biased composition (polar residues); the sequence is PQGSSDNGDS. Basic and acidic residues predominate over residues 1145–1155; the sequence is ESNRRGGEPAK.

It belongs to the DNA polymerase type-B family. As to quaternary structure, forms a complex with the ssDNA-binding protein UL57, the DNA polymerase processivity factor UL44, and the alkaline exonuclease UL98. Interacts with the putative helicase-primase complex composed of UL70, UL102 and UL105 proteins; these interactions may coordinate leading and lagging strand DNA synthesis at the replication fork.

The protein resides in the host nucleus. The catalysed reaction is DNA(n) + a 2'-deoxyribonucleoside 5'-triphosphate = DNA(n+1) + diphosphate. In terms of biological role, replicates viral genomic DNA in the late phase of lytic infection, producing long concatemeric DNA. The replication complex is composed of six viral proteins: the DNA polymerase, processivity factor, primase, primase-associated factor, helicase, and ssDNA-binding protein. The polypeptide is DNA polymerase catalytic subunit (UL54) (Homo sapiens (Human)).